We begin with the raw amino-acid sequence, 126 residues long: uncharacterized protein (126 aa).

Residues 1–9 (MCTYIITQS) are Extracellular-facing. A helical membrane pass occupies residues 10–30 (FFFLPCLSFLFFKLVGFFDSV). Topologically, residues 31–73 (FTAGKSLRIMFELPIFDKLTSCFAAIDCSATSLDIPFAEEELF) are cytoplasmic. The helical transmembrane segment at 74–94 (LMLVSEPVLIPFLFVFEFMLI) threads the bilayer. Over 95-126 (CKPCGSRSRFGFPVKNVSDFEETLEFDPTLLV) the chain is Extracellular.

Its subcellular location is the membrane. This is an uncharacterized protein from Saccharomyces cerevisiae (strain ATCC 204508 / S288c) (Baker's yeast).